Consider the following 4080-residue polypeptide: Hybrid PKS-NRPS synthetase poxE (4080 aa).

The region spanning 8–442 is the Ketosynthase family 3 (KS3) domain; the sequence is REPIAIVGSG…GTNAHAIIEA (435 aa). Active-site for beta-ketoacyl synthase activity residues include Cys181, His320, and His362. The segment at 554–878 is malonyl-CoA:ACP transacylase (MAT) domain; the sequence is VFTGQGAQWA…QRGMNDVEAM (325 aa). The segment at 944-1078 is N-terminal hotdog fold; the sequence is HPILGTRCPD…GRLVITYGPV (135 aa). In terms of domain architecture, PKS/mFAS DH spans 944-1246; that stretch reads HPILGTRCPD…AVPLEATNAD (303 aa). A dehydratase (DH) domain region spans residues 945–1243; sequence PILGTRCPDG…GIHAVPLEAT (299 aa). The Proton acceptor; for dehydratase activity role is filled by His976. A C-terminal hotdog fold region spans residues 1093-1246; it reads MVDVPSERFY…AVPLEATNAD (154 aa). Asp1152 acts as the Proton donor; for dehydratase activity in catalysis. Positions 1400-1585 are methyltransferase (MT) domain; that stretch reads HFSDYLASVV…GVDTFTSDAD (186 aa). The interval 2118–2292 is ketoreductase (KR)domain; that stretch reads TYWLVGLTGS…AGSVMNIGAI (175 aa). Residues 2399 to 2478 form a peptidyl carrier protein region; that stretch reads TTDEIYEVIK…TIGEIIKFVL (80 aa). One can recognise a Carrier 1 domain in the interval 2405–2481; sequence EVIKECFIVK…EIIKFVLEKL (77 aa). An O-(pantetheine 4'-phosphoryl)serine modification is found at Ser2441. Positions 2488-2569 are disordered; sequence SLGLSPPTGA…AASPSIHTEE (82 aa). The segment covering 2511–2525 has biased composition (basic and acidic residues); it reads VVVERRNVPRLEKKI. Over residues 2528–2545 the composition is skewed to low complexity; it reads SAGSRTSSSVTGTSKSVS. The span at 2551-2565 shows a compositional bias: polar residues; sequence DTASSQTSEAASPSI. The tract at residues 2607–3036 is condensation; sequence KEPLSFGQSR…DSKQPGGHVS (430 aa). The segment at 3069-3478 is adenylation; sequence DMAKQYPQKL…DGRLRIEGRI (410 aa). Residues 3593–3673 form the Carrier 2 domain; the sequence is AHLNEAQAQM…KMALLIKPQE (81 aa). The interval 3598–3670 is thiolation; the sequence is AQAQMVQLWE…TLEKMALLIK (73 aa). O-(pantetheine 4'-phosphoryl)serine is present on Ser3633. Positions 3740 to 3959 are reductase (RED) domain; that stretch reads LTGATGFIGQ…DFVPVEQVVR (220 aa).

In the C-terminal section; belongs to the NRP synthetase family.

The protein operates within secondary metabolite biosynthesis. Functionally, hybrid PKS-NRPS synthetase; part of the gene cluster that mediates the biosynthesis of oxaleimides, cytotoxic compounds containing an unusual disubstituted succinimide moiety. The first step of the pathway is provided by the HR-PKS poxF that serves in a new mode of collaborative biosynthesis with the PKS-NRPS poxE, by providing the olefin containing amino acid substrate via the synthesis of an ACP-bound dec-4-enoate. The cytochrome P450 monooxygenase poxM-catalyzed oxidation at the alpha-position creates the enzyme-bound 2-hydroxydec-4-enoyl-ACP thioester, which may be prone to spontaneous hydrolysis to yield 2-hydroxydec-4-enoic acid due to increased electrophilicity of the carbonyl. 2-hydroxydec-4-enoic acid can then be further oxidized by poxM to yield the alpha-ketoacid 2-oxodec-4-enoicacid, which is reductively aminated by the aminotransferase poxL to yield (S,E)-2-aminodec-4-enoic acid. The Hybrid PKS-NRPS synthetase poxE then performs condensation between the octaketide product of its PKS modules and the amino group of (S,E)-2-aminodec-4-enoic acid which is activated and incorporated by the adenylation domain. The resulting aminoacyl product can be cyclized by the Diels-Alderase PoxQ and reductively released by the reductive (R) domain of poxE to yield an aldehyde intermediate. The released aldehyde is then substrate for a Knoevenagel condensation by the hydrolyase poxO followed by an oxidation at the 5-position of the pyrrolidone ring. The presence of the olefin from the amino acid building block allows for migration of the substituted allyl group to occur. This allylic transposition reaction takes place in a conjugate addition, semipinacol-like fashion to yield a succinimide intermediate. Iterative two-electron oxidations of the C7 methyl of the succinimide intermediate to the carboxylic acid can be catalyzed by one of two remaining cytochrome P450 monooxygenasess poxC or poxD to yield oxaleimide A. Subsequent oxidation yields the maleimide scaffold oxaleimide I. Both oxaleimide A and oxaleimide I can undergo oxidative modifications in the decalin ring to yield the series of products oxaleimides B to H. The chain is Hybrid PKS-NRPS synthetase poxE from Penicillium oxalicum.